The chain runs to 83 residues: Hepcidin-2 (83 aa).

An N-terminal signal peptide occupies residues 1-26 (MALSTRTQAACLLLLLLASLSSTTYL). Residues 27-53 (QQQMRQTTELQPLHGEESRADIAIPMQ) constitute a propeptide that is removed on maturation. 4 cysteine pairs are disulfide-bonded: Cys65–Cys81, Cys68–Cys71, Cys69–Cys77, and Cys72–Cys80.

This sequence belongs to the hepcidin family. As to expression, highly expressed in the liver and to a much lesser extent in the heart. Also expressed in pancreas.

The protein localises to the secreted. Its function is as follows. Seems to act as a signaling molecule involved in the maintenance of iron homeostasis. This chain is Hepcidin-2 (Hamp2), found in Mus musculus (Mouse).